Here is a 453-residue protein sequence, read N- to C-terminus: Phosphoglucosamine mutase (453 aa).

S110 functions as the Phosphoserine intermediate in the catalytic mechanism. Residues S110, D247, D249, and D251 each contribute to the Mg(2+) site. A Phosphoserine modification is found at S110.

The protein belongs to the phosphohexose mutase family. Requires Mg(2+) as cofactor. In terms of processing, activated by phosphorylation.

The catalysed reaction is alpha-D-glucosamine 1-phosphate = D-glucosamine 6-phosphate. Catalyzes the conversion of glucosamine-6-phosphate to glucosamine-1-phosphate. The protein is Phosphoglucosamine mutase of Tropheryma whipplei (strain TW08/27) (Whipple's bacillus).